Here is a 1368-residue protein sequence, read N- to C-terminus: DNA-directed RNA polymerase subunit beta (1368 aa).

The protein belongs to the RNA polymerase beta chain family. In terms of assembly, the RNAP catalytic core consists of 2 alpha, 1 beta, 1 beta' and 1 omega subunit. When a sigma factor is associated with the core the holoenzyme is formed, which can initiate transcription.

It carries out the reaction RNA(n) + a ribonucleoside 5'-triphosphate = RNA(n+1) + diphosphate. DNA-dependent RNA polymerase catalyzes the transcription of DNA into RNA using the four ribonucleoside triphosphates as substrates. The protein is DNA-directed RNA polymerase subunit beta of Janthinobacterium sp. (strain Marseille) (Minibacterium massiliensis).